Reading from the N-terminus, the 84-residue chain is Kappa-conotoxin-like Im11.3 (84 aa).

The signal sequence occupies residues 1–26 (MMFRLTSVSCFLLVIACLNLFQVVLT). 4 disulfide bridges follow: cysteine 29/cysteine 43, cysteine 36/cysteine 48, cysteine 42/cysteine 51, and cysteine 47/cysteine 64. The propeptide occupies 71–84 (LRPSHPLFLLLPAR).

This sequence belongs to the conotoxin I2 superfamily. In terms of tissue distribution, expressed by the venom duct.

Its subcellular location is the secreted. Functionally, inhibits the vertebrate voltage-gated potassium channels Kv1.1/KCNA1 and Kv1.3/KCNA3. In Conus imperialis (Imperial cone), this protein is Kappa-conotoxin-like Im11.3.